A 579-amino-acid chain; its full sequence is MVLSEVWTTLSGVSGVCLACSLLSAAVVLRWTGRQKARGAATRARQKQRASLETMDKAVQRFRLQNPDLDSEALLTLPLLQLVQKLQSGELSPEAVFFTYLGKAWEVNKGTNCVTSYLTDCETQLSQAPRQGLLYGVPVSLKECFSYKGHDSTLGLSLNEGMPSESDCVVVQVLKLQGAVPFVHTNVPQSMLSFDCSNPLFGQTMNPWKSSKSPGGSSGGEGALIGSGGSPLGLGTDIGGSIRFPSAFCGICGLKPTGNRLSKSGLKGCVYGQTAVQLSLGPMARDVESLALCLKALLCEHLFTLDPTVPPLPFREEVYRSSRPLRVGYYETDNYTMPSPAMRRALIETKQRLEAAGHTLIPFLPNNIPYALEVLSAGGLFSDGGRSFLQNFKGDFVDPCLGDLILILRLPSWFKRLLSLLLKPLFPRLAAFLNSMRPRSAEKLWKLQHEIEMYRQSVIAQWKAMNLDVLLTPMLGPALDLNTPGRATGAISYTVLYNCLDFPAGVVPVTTVTAEDDAQMELYKGYFGDIWDIILKKAMKNSVGLPVAVQCVALPWQEELCLRFMREVEQLMTPQKQPS.

Residues 9-29 form a helical membrane-spanning segment; sequence TLSGVSGVCLACSLLSAAVVL. Residues 30-403 are Cytoplasmic-facing; sequence RWTGRQKARG…GDFVDPCLGD (374 aa). Lysine 142 functions as the Charge relay system in the catalytic mechanism. Substrate-binding positions include methionine 191, serine 217, and 238 to 241; that span reads IGGS. Residue serine 217 is the Charge relay system of the active site. The active-site Acyl-ester intermediate is the serine 241. Serine 241 is subject to Phosphoserine. The stretch at 404–433 is an intramembrane region; it reads LILILRLPSWFKRLLSLLLKPLFPRLAAFL. The Cytoplasmic segment spans residues 434-579; that stretch reads NSMRPRSAEK…QLMTPQKQPS (146 aa).

The protein belongs to the amidase family. In terms of assembly, homodimer. Found in neuronal cells throughout the CNS. Expressed in liver and brain, and to a lesser extent in spleen, lung, kidney and testes.

The protein resides in the endoplasmic reticulum membrane. Its subcellular location is the golgi apparatus membrane. The catalysed reaction is N-(5Z,8Z,11Z,14Z-eicosatetraenoyl)-ethanolamine + H2O = ethanolamine + (5Z,8Z,11Z,14Z)-eicosatetraenoate. It carries out the reaction (9Z)-octadecenamide + H2O = (9Z)-octadecenoate + NH4(+). It catalyses the reaction 2-(5Z,8Z,11Z,14Z-eicosatetraenoyl)-glycerol + H2O = glycerol + (5Z,8Z,11Z,14Z)-eicosatetraenoate + H(+). The enzyme catalyses (9Z,12Z,15Z)-octadecatrienamide + H2O = (9Z,12Z,15Z)-octadecatrienoate + NH4(+). The catalysed reaction is (5Z,8Z,11Z,14Z)-eicosatetraenamide + H2O = (5Z,8Z,11Z,14Z)-eicosatetraenoate + NH4(+). It carries out the reaction (6Z)-octadecenamide + H2O = (6Z)-octadecenoate + NH4(+). It catalyses the reaction (15Z)-tetracosenamide + H2O = (15Z)-tetracosenoate + NH4(+). The enzyme catalyses (8Z,11Z,14Z)-eicosatrienamide + H2O = (8Z,11Z,14Z)-eicosatrienoate + NH4(+). The catalysed reaction is (11Z,14Z,17Z)-eicosatrienamide + H2O = (11Z,14Z,17Z)-eicosatrienoate + NH4(+). It carries out the reaction (11Z,14Z)-eicosadienamide + H2O = (11Z,14Z)-eicosadienoate + NH4(+). It catalyses the reaction (9Z,12Z)-octadecadienamide + H2O = (9Z,12Z)-octadecadienoate + NH4(+). The enzyme catalyses tetradecamide + H2O = tetradecanoate + NH4(+). The catalysed reaction is N-(9Z-octadecenoyl) ethanolamine + H2O = ethanolamine + (9Z)-octadecenoate. It carries out the reaction N-(9Z-octadecenoyl)-taurine + H2O = taurine + (9Z)-octadecenoate. It catalyses the reaction 1-O-methyl-(5Z,8Z,11Z,14Z)-eicosatetraenoate + H2O = methanol + (5Z,8Z,11Z,14Z)-eicosatetraenoate + H(+). The enzyme catalyses (11Z)-eicosenamide + H2O = (11Z)-eicosenoate + NH4(+). The catalysed reaction is N-(9Z-hexadecenoyl) ethanolamine + H2O = (9Z)-hexadecenoate + ethanolamine. It carries out the reaction N-octadecanoyl ethanolamine + H2O = octadecanoate + ethanolamine. It catalyses the reaction N-docosanoyl-ethanolamine + H2O = docosanoate + ethanolamine. The enzyme catalyses N-tetracosanoyl-taurine + H2O = tetracosanoate + taurine. The catalysed reaction is N-(15Z-tetracosenoyl)-ethanolamine + H2O = (15Z)-tetracosenoate + ethanolamine. It carries out the reaction N-docosanoyl-taurine + H2O = docosanoate + taurine. It catalyses the reaction N-(15Z-tetracosenoyl)-taurine + H2O = (15Z)-tetracosenoate + taurine. The enzyme catalyses N-tricosanoyl-taurine + H2O = tricosanoate + taurine. The catalysed reaction is (9Z)-octadecenoate + glycine = N-(9Z-octadecenoyl)glycine + H2O. It carries out the reaction N-(5Z,8Z,11Z,14Z)-eicosatetraenoyl-glycine + H2O = (5Z,8Z,11Z,14Z)-eicosatetraenoate + glycine. It catalyses the reaction N-(5Z,8Z,11Z,14Z-eicosatetraenoyl)-L-serine + H2O = (5Z,8Z,11Z,14Z)-eicosatetraenoate + L-serine. Inhibited by trifluoromethyl ketone. Its function is as follows. Catalyzes the hydrolysis of endogenous amidated lipids like the sleep-inducing lipid oleamide ((9Z)-octadecenamide), the endocannabinoid anandamide (N-(5Z,8Z,11Z,14Z-eicosatetraenoyl)-ethanolamine), as well as other fatty amides, to their corresponding fatty acids, thereby regulating the signaling functions of these molecules. Hydrolyzes polyunsaturated substrate anandamide preferentially as compared to monounsaturated substrates. It can also catalyze the hydrolysis of the endocannabinoid 2-arachidonoylglycerol (2-(5Z,8Z,11Z,14Z-eicosatetraenoyl)-glycerol). FAAH cooperates with PM20D1 in the hydrolysis of amino acid-conjugated fatty acids such as N-fatty acyl glycine and N-fatty acyl-L-serine, thereby acting as a physiological regulator of specific subsets of intracellular, but not of extracellular, N-fatty acyl amino acids. The sequence is that of Fatty-acid amide hydrolase 1 (Faah) from Rattus norvegicus (Rat).